A 661-amino-acid polypeptide reads, in one-letter code: 7-beta-hydroxy-3-oxochol-24-oyl-CoA 4-desaturase (661 aa).

Residue glutamine 104 coordinates FMN. Substrate is bound at residue 168–171; it reads HCAH. The active-site Proton donor is the tyrosine 173. Residues arginine 222, lysine 298, and 320–321 contribute to the FMN site; that span reads GR. [4Fe-4S] cluster contacts are provided by cysteine 344, cysteine 347, cysteine 351, and cysteine 363. 5 residues coordinate FAD: glycine 394, glutamate 413, glutamine 421, lysine 431, and alanine 458.

It in the N-terminal section; belongs to the NADH:flavin oxidoreductase/NADH oxidase family. Homotrimer. FMN serves as cofactor. It depends on FAD as a cofactor. [4Fe-4S] cluster is required as a cofactor.

It carries out the reaction 7beta-hydroxy-3-oxochol-24-oyl-CoA + NAD(+) = 7beta-hydroxy-3-oxochol-4-en-24-oyl-CoA + NADH + H(+). It functions in the pathway lipid metabolism; bile acid degradation. With respect to regulation, activity is inhibited by sulfhydryl-reactive compounds, acriflavine, o-phenanthroline and EDTA. NADH-dependent flavin oxidoreductase. Stereo-specific NAD(H)-dependent 3-oxo-delta4-cholenoic acid oxidoreductase involved in bile acid 7beta-dehydroxylation. The polypeptide is 7-beta-hydroxy-3-oxochol-24-oyl-CoA 4-desaturase (Clostridium scindens (strain JCM 10418 / VPI 12708)).